Reading from the N-terminus, the 384-residue chain is Decapping nuclease RAI1 (384 aa).

Glu-168 contacts a divalent metal cation. Glu-217 lines the substrate pocket. A divalent metal cation contacts are provided by Asp-219, Glu-237, and Leu-238. Substrate-binding residues include Lys-239 and Gln-263.

Belongs to the DXO/Dom3Z family. As to quaternary structure, interacts with RAT1; the interaction is direct, stabilizes RAT1 protein structure and stimulates its exoribonuclease activity. The interaction also stimulates RAI1 pyrophosphohydrolase activity, probably by recruiting it to mRNA substrates. A divalent metal cation serves as cofactor.

It localises to the nucleus. It carries out the reaction a 5'-end NAD(+)-phospho-ribonucleoside in mRNA + H2O = a 5'-end phospho-ribonucleoside in mRNA + NAD(+) + H(+). The enzyme catalyses a 5'-end (N(7)-methyl 5'-triphosphoguanosine)-ribonucleoside-ribonucleotide in mRNA + H2O = a (N(7)-methyl 5'-triphosphoguanosine)-nucleoside + a 5'-end phospho-ribonucleoside in mRNA + H(+). The catalysed reaction is a 5'-end triphospho-ribonucleoside in mRNA + H2O = a 5'-end phospho-ribonucleoside in mRNA + diphosphate + H(+). Its function is as follows. Decapping enzyme for NAD-capped RNAs: specifically hydrolyzes the nicotinamide adenine dinucleotide (NAD) cap from a subset of RNAs by removing the entire NAD moiety from the 5'-end of an NAD-capped RNA. The NAD-cap is present at the 5'-end of some RNAs and snoRNAs. In contrast to the canonical 5'-end N7 methylguanosine (m7G) cap, the NAD cap promotes mRNA decay. Also acts as a non-canonical decapping enzyme that removes the entire cap structure of m7G capped or incompletely capped RNAs. Has decapping activity toward incomplete 5'-end m7G cap mRNAs such as unmethylated 5'-end-capped RNA (cap0), while it has no activity toward 2'-O-ribose methylated m7G cap (cap1). Also possesses RNA 5'-pyrophosphohydrolase activity by hydrolyzing the 5'-end triphosphate to release pyrophosphates. Stimulates exoribonuclease activity of Rat1, allowing it to degrade RNAs with stable secondary structure more effectively. In Kluyveromyces lactis (strain ATCC 8585 / CBS 2359 / DSM 70799 / NBRC 1267 / NRRL Y-1140 / WM37) (Yeast), this protein is Decapping nuclease RAI1 (RAI1).